Here is a 1473-residue protein sequence, read N- to C-terminus: Ovostatin (1473 aa).

The first 36 residues, 1 to 36 (MHCFLGREILSFFCLTVRKMWLKFILAILLLHAAAG), serve as a signal peptide directing secretion. N-linked (GlcNAc...) asparagine glycosylation is found at N67, N82, N89, N191, N342, N403, N527, N588, N757, N1141, N1221, N1315, and N1347.

The protein belongs to the protease inhibitor I39 (alpha-2-macroglobulin) family. Homotetramer, which consists of two pairs of disulfide-linked chains. Post-translationally, lacks the thioester bond found in other members of this family. Glycosylated; contains 56 glucosamine units per subunit.

It is found in the secreted. In terms of biological role, is able to inhibit all four classes of proteinases by a unique 'trapping' mechanism. This protein has a peptide stretch, called the 'bait region' which contains specific cleavage sites for different proteinases. When a proteinase cleaves the bait region, a conformational change is induced in the protein which traps the proteinase. The entrapped enzyme remains active against low molecular weight substrates (activity against high molecular weight substrates is greatly reduced). The polypeptide is Ovostatin (Gallus gallus (Chicken)).